Reading from the N-terminus, the 124-residue chain is Basic leucine zipper transcriptional factor ATF-like (124 aa).

The span at 1-23 shows a compositional bias: polar residues; it reads MAQGSDNNDTSYTKSPSPGNKQG. The segment at 1–60 is disordered; that stretch reads MAQGSDNNDTSYTKSPSPGNKQGSSDDMRKVMRREKNRIAAQKSRMRQTQKADSLHLESE. Residues 27-90 form the bZIP domain; the sequence is DMRKVMRREK…KYLSTVLSNH (64 aa). A basic motif region spans residues 29 to 51; the sequence is RKVMRREKNRIAAQKSRMRQTQK. Positions 55-83 are leucine-zipper; the sequence is LHLESESLEKENAALRKEVKRLTEEAKYL.

Belongs to the bZIP family.

It is found in the nucleus. It localises to the cytoplasm. Its function is as follows. AP-1 family transcription factor that controls the differentiation of lineage-specific cells in the immune system: specifically mediates the differentiation of T-helper 17 cells (Th17), follicular T-helper cells (TfH), CD8(+) dendritic cells and class-switch recombination (CSR) in B-cells. The polypeptide is Basic leucine zipper transcriptional factor ATF-like (batf) (Danio rerio (Zebrafish)).